The chain runs to 104 residues: Large ribosomal subunit protein uL24 (104 aa).

This sequence belongs to the universal ribosomal protein uL24 family. In terms of assembly, part of the 50S ribosomal subunit.

Its function is as follows. One of two assembly initiator proteins, it binds directly to the 5'-end of the 23S rRNA, where it nucleates assembly of the 50S subunit. Functionally, one of the proteins that surrounds the polypeptide exit tunnel on the outside of the subunit. In Dichelobacter nodosus (strain VCS1703A), this protein is Large ribosomal subunit protein uL24.